The chain runs to 148 residues: Large ribosomal subunit protein uL15 (148 aa).

Over residues 1 to 30 the composition is skewed to basic residues; sequence MPSRLRKTRKLRGHVSHGHGRIGKHRKHPG. The segment at 1-37 is disordered; the sequence is MPSRLRKTRKLRGHVSHGHGRIGKHRKHPGGRGNAGG. A (3S)-3-hydroxyhistidine modification is found at histidine 39. N6-acetyllysine is present on residues lysine 47 and lysine 55. Position 68 is a phosphoserine (serine 68). Lysine 110 is modified (N6-acetyllysine).

The protein belongs to the universal ribosomal protein uL15 family. Component of the large ribosomal subunit. Hydroxylated on His-39 by MINA.

The protein resides in the cytoplasm. Its function is as follows. Component of the large ribosomal subunit. The ribosome is a large ribonucleoprotein complex responsible for the synthesis of proteins in the cell. This is Large ribosomal subunit protein uL15 (Rpl27a) from Mus musculus (Mouse).